A 181-amino-acid polypeptide reads, in one-letter code: MALRPAKIDRYVDKPAYTRREYIRGAPGPKITIFDMGNPAGDFEFEVALHVSQPVQIRQNALEAARQQVNRYLQKNVGRSNYHFKIRVYPFQVLRENPMATGRKADRYGNGMRRPFGKPIGLAARLKKDQKVLSIRVNRQHLKFAIEGARRAAMKFPVKCYYRIYDKEGNDVTTKILSQGL.

Belongs to the universal ribosomal protein uL16 family.

The chain is Large ribosomal subunit protein uL16 from Pyrococcus abyssi (strain GE5 / Orsay).